A 250-amino-acid polypeptide reads, in one-letter code: Ubiquinone/menaquinone biosynthesis C-methyltransferase UbiE (250 aa).

Residues Ser73, Asp94, and 122–123 (NA) each bind S-adenosyl-L-methionine.

The protein belongs to the class I-like SAM-binding methyltransferase superfamily. MenG/UbiE family.

It catalyses the reaction a 2-demethylmenaquinol + S-adenosyl-L-methionine = a menaquinol + S-adenosyl-L-homocysteine + H(+). The catalysed reaction is a 2-methoxy-6-(all-trans-polyprenyl)benzene-1,4-diol + S-adenosyl-L-methionine = a 5-methoxy-2-methyl-3-(all-trans-polyprenyl)benzene-1,4-diol + S-adenosyl-L-homocysteine + H(+). It functions in the pathway quinol/quinone metabolism; menaquinone biosynthesis; menaquinol from 1,4-dihydroxy-2-naphthoate: step 2/2. It participates in cofactor biosynthesis; ubiquinone biosynthesis. Its function is as follows. Methyltransferase required for the conversion of demethylmenaquinol (DMKH2) to menaquinol (MKH2) and the conversion of 2-polyprenyl-6-methoxy-1,4-benzoquinol (DDMQH2) to 2-polyprenyl-3-methyl-6-methoxy-1,4-benzoquinol (DMQH2). This Legionella pneumophila (strain Corby) protein is Ubiquinone/menaquinone biosynthesis C-methyltransferase UbiE.